A 152-amino-acid chain; its full sequence is Protein PLANT CADMIUM RESISTANCE 2 (152 aa).

Residues 57–79 (TAGALYALIAVVTGCACIYSCFY) form a helical membrane-spanning segment.

This sequence belongs to the cornifelin family. As to quaternary structure, homooligomer. In terms of tissue distribution, expressed in roots, leaves, shoots, stems, flowers and siliques. In leaves, restricted mainly to the vascular tissue. Expressed in all cells in the root tip, in the vascular tissue and the epidermis in the elongation zone, and only in the epidermal cells in the root hair zone.

It is found in the cell membrane. Its function is as follows. Zinc transporter acting in both zinc extrusion and long-distance zinc transport. Involved in the loading of zinc into the xyleme and in the detoxification of excess zinc at the epidermal cells. Acts independently from the zinc transporters HMA2 and HMA4. May be also involved in cadmium resistance. This Arabidopsis thaliana (Mouse-ear cress) protein is Protein PLANT CADMIUM RESISTANCE 2 (PCR2).